Reading from the N-terminus, the 264-residue chain is Hydroxyethylthiazole kinase (264 aa).

Methionine 52 is a binding site for substrate. The ATP site is built by arginine 127 and threonine 173. Residue glycine 200 participates in substrate binding.

Belongs to the Thz kinase family. Requires Mg(2+) as cofactor.

It carries out the reaction 5-(2-hydroxyethyl)-4-methylthiazole + ATP = 4-methyl-5-(2-phosphooxyethyl)-thiazole + ADP + H(+). Its pathway is cofactor biosynthesis; thiamine diphosphate biosynthesis; 4-methyl-5-(2-phosphoethyl)-thiazole from 5-(2-hydroxyethyl)-4-methylthiazole: step 1/1. Catalyzes the phosphorylation of the hydroxyl group of 4-methyl-5-beta-hydroxyethylthiazole (THZ). This chain is Hydroxyethylthiazole kinase, found in Serratia proteamaculans (strain 568).